Here is a 338-residue protein sequence, read N- to C-terminus: Glycerol-3-phosphate dehydrogenase [NAD(P)+] (338 aa).

5 residues coordinate NADPH: Ser11, Trp12, His32, Arg33, and Lys106. Sn-glycerol 3-phosphate contacts are provided by Lys106, Gly137, and Ser139. An NADPH-binding site is contributed by Ala141. Sn-glycerol 3-phosphate is bound by residues Lys192, Asp245, Ser255, Arg256, and Asn257. The active-site Proton acceptor is the Lys192. Arg256 contributes to the NADPH binding site. NADPH-binding residues include Val280 and Glu282.

The protein belongs to the NAD-dependent glycerol-3-phosphate dehydrogenase family.

It is found in the cytoplasm. It catalyses the reaction sn-glycerol 3-phosphate + NAD(+) = dihydroxyacetone phosphate + NADH + H(+). It carries out the reaction sn-glycerol 3-phosphate + NADP(+) = dihydroxyacetone phosphate + NADPH + H(+). It participates in membrane lipid metabolism; glycerophospholipid metabolism. In terms of biological role, catalyzes the reduction of the glycolytic intermediate dihydroxyacetone phosphate (DHAP) to sn-glycerol 3-phosphate (G3P), the key precursor for phospholipid synthesis. This is Glycerol-3-phosphate dehydrogenase [NAD(P)+] from Lysinibacillus sphaericus (strain C3-41).